The primary structure comprises 129 residues: Small ribosomal subunit protein uS11 (129 aa).

Belongs to the universal ribosomal protein uS11 family. In terms of assembly, part of the 30S ribosomal subunit. Interacts with proteins S7 and S18. Binds to IF-3.

Located on the platform of the 30S subunit, it bridges several disparate RNA helices of the 16S rRNA. Forms part of the Shine-Dalgarno cleft in the 70S ribosome. The chain is Small ribosomal subunit protein uS11 from Actinobacillus succinogenes (strain ATCC 55618 / DSM 22257 / CCUG 43843 / 130Z).